The following is an 83-amino-acid chain: ATP synthase subunit 9, mitochondrial (83 aa).

Helical transmembrane passes span 8-28 (IGAG…GNVL) and 45-72 (SFGY…LISS).

It belongs to the ATPase C chain family. As to quaternary structure, F-type ATPases have 2 components, CF(1) - the catalytic core - and CF(0) - the membrane proton channel. CF(1) has five subunits: alpha(3), beta(3), gamma(1), delta(1), epsilon(1). CF(0) has three main subunits: a, b and c.

It localises to the mitochondrion membrane. Functionally, this protein is one of the chains of the nonenzymatic membrane component (F0) of mitochondrial ATPase. The sequence is that of ATP synthase subunit 9, mitochondrial (ATP9) from Helianthus annuus (Common sunflower).